An 821-amino-acid polypeptide reads, in one-letter code: Xylosyltransferase 1 (821 aa).

Residues Tyr-1–Lys-121 form a disordered region. At Tyr-1 to Arg-821 the chain is on the lumenal side. Residues Lys-9–Glu-25 show a composition bias toward basic and acidic residues. The segment covering Val-27–Thr-36 has biased composition (polar residues). Basic and acidic residues-rich tracts occupy residues His-41–Gln-58 and Gly-76–Ala-87. N-linked (GlcNAc...) asparagine glycosylation occurs at Asn-90. 4 disulfides stabilise this stretch: Cys-122–Cys-150, Cys-166–Cys-407, Cys-426–Cys-439, and Cys-428–Cys-437. Residues Val-198, Asp-226, and Thr-255 to Trp-257 each bind UDP-alpha-D-xylose. The N-linked (GlcNAc...) asparagine glycan is linked to Asn-286. Position 359–360 (Asp-359–Trp-360) interacts with UDP-alpha-D-xylose. UDP-alpha-D-xylose is bound by residues Ser-440 and Arg-463–Lys-464. Intrachain disulfides connect Cys-540/Cys-789 and Cys-782/Cys-795. Asn-642 carries N-linked (GlcNAc...) asparagine glycosylation. The segment at Ser-801–Arg-821 is disordered.

It belongs to the glycosyltransferase 14 family. XylT subfamily. As to quaternary structure, monomer. Requires a divalent metal cation as cofactor. Post-translationally, contains 7 disulfide bonds. In terms of processing, N-glycosylated.

It localises to the golgi apparatus membrane. The enzyme catalyses UDP-alpha-D-xylose + L-seryl-[protein] = 3-O-(beta-D-xylosyl)-L-seryl-[protein] + UDP + H(+). It functions in the pathway glycan metabolism; chondroitin sulfate biosynthesis. Its pathway is glycan metabolism; heparan sulfate biosynthesis. In terms of biological role, catalyzes the first step in the biosynthesis of chondroitin sulfate and dermatan sulfate proteoglycans, such as DCN. Transfers D-xylose from UDP-D-xylose to specific serine residues of the core protein. Required for normal maturation of chondrocytes during bone development, normal onset of ossification and normal embryonic and postnatal skeleton development, especially of the long bones. The polypeptide is Xylosyltransferase 1 (Xylt1) (Rattus norvegicus (Rat)).